The primary structure comprises 406 residues: B3 domain-containing protein Os11g0197600 (406 aa).

Residues 1 to 20 (MVVREKQGGRMGKGKGKGKE) are disordered. Positions 30 to 123 (RSFFRVLLTL…QFSVTVFEPS (94 aa)) form a DNA-binding region, TF-B3 1. A disordered region spans residues 199–245 (ESSRRKRAGASAGKSKVTSTSHNSTRGSSCSSDEDNSSSKSPNPPFL). Residues 214 to 225 (KVTSTSHNSTRG) are compositionally biased toward polar residues. The segment at residues 298 to 393 (AVQIMMESYV…NIKVHIYRVV (96 aa)) is a DNA-binding region (TF-B3 2).

The protein localises to the nucleus. The chain is B3 domain-containing protein Os11g0197600 from Oryza sativa subsp. japonica (Rice).